We begin with the raw amino-acid sequence, 24 residues long: Brevinin-1BYc (24 aa).

Cysteines 18 and 24 form a disulfide.

Expressed by the skin glands.

The protein resides in the secreted. In terms of biological role, antibacterial activity against Gram-positive bacterium S.aureus. Weak antifungal activity against C.albicans. The chain is Brevinin-1BYc from Rana boylii (Foothill yellow-legged frog).